A 221-amino-acid polypeptide reads, in one-letter code: MMNLKQLAGEYAAGFVRDGMTIGLGTGSTVYWTIQKLGHRVQEGLSIQAVPTSKETEVLAKQLSIPLISLNEIDILDLTIDGADEINNDLQLIKGGGGALLREKIVATSSKELIIIADESKLVSHLGTFPLPIEIISFSWKQTEKRIQSLGCETHLRMKDSRPFITDNGNLIIDCIFPNKILNPNDTHTELKMITGVVETGLFINMKSKAIIGTKNGIKEY.

Substrate is bound by residues T26–T29, D81–D84, and K94–G97. The Proton acceptor role is filled by E103. K121 serves as a coordination point for substrate.

This sequence belongs to the ribose 5-phosphate isomerase family. Homodimer.

The enzyme catalyses aldehydo-D-ribose 5-phosphate = D-ribulose 5-phosphate. It functions in the pathway carbohydrate degradation; pentose phosphate pathway; D-ribose 5-phosphate from D-ribulose 5-phosphate (non-oxidative stage): step 1/1. In terms of biological role, catalyzes the reversible conversion of ribose-5-phosphate to ribulose 5-phosphate. This Bacillus mycoides (strain KBAB4) (Bacillus weihenstephanensis) protein is Ribose-5-phosphate isomerase A.